Reading from the N-terminus, the 271-residue chain is Phosphatidylglycerol--prolipoprotein diacylglyceryl transferase (271 aa).

7 consecutive transmembrane segments (helical) span residues 25–45 (WYGI…KFFV), 60–80 (YFIW…ILIY), 103–123 (FVGI…IATL), 134–154 (WIFL…GRIG), 181–201 (PSQL…VYLA), 209–229 (GELI…CEFY), and 235–255 (GIGF…IMFI). Residue Arg-152 participates in a 1,2-diacyl-sn-glycero-3-phospho-(1'-sn-glycerol) binding.

Belongs to the Lgt family.

The protein localises to the cell inner membrane. It carries out the reaction L-cysteinyl-[prolipoprotein] + a 1,2-diacyl-sn-glycero-3-phospho-(1'-sn-glycerol) = an S-1,2-diacyl-sn-glyceryl-L-cysteinyl-[prolipoprotein] + sn-glycerol 1-phosphate + H(+). The protein operates within protein modification; lipoprotein biosynthesis (diacylglyceryl transfer). In terms of biological role, catalyzes the transfer of the diacylglyceryl group from phosphatidylglycerol to the sulfhydryl group of the N-terminal cysteine of a prolipoprotein, the first step in the formation of mature lipoproteins. This chain is Phosphatidylglycerol--prolipoprotein diacylglyceryl transferase, found in Campylobacter jejuni subsp. jejuni serotype O:6 (strain 81116 / NCTC 11828).